Here is a 385-residue protein sequence, read N- to C-terminus: tRNA-specific 2-thiouridylase MnmA (385 aa).

ATP is bound by residues 18 to 25 and Leu-44; that span reads AMSGGVDS. The active-site Nucleophile is the Cys-112. A disulfide bridge connects residues Cys-112 and Cys-209. Residue Gly-136 coordinates ATP. The interval 159–161 is interaction with tRNA; sequence RDQ. The Cysteine persulfide intermediate role is filled by Cys-209.

This sequence belongs to the MnmA/TRMU family.

It localises to the cytoplasm. The catalysed reaction is S-sulfanyl-L-cysteinyl-[protein] + uridine(34) in tRNA + AH2 + ATP = 2-thiouridine(34) in tRNA + L-cysteinyl-[protein] + A + AMP + diphosphate + H(+). Catalyzes the 2-thiolation of uridine at the wobble position (U34) of tRNA, leading to the formation of s(2)U34. This is tRNA-specific 2-thiouridylase MnmA from Methylorubrum populi (strain ATCC BAA-705 / NCIMB 13946 / BJ001) (Methylobacterium populi).